Reading from the N-terminus, the 839-residue chain is Autophagy-related protein 9A (839 aa).

Positions 1-20 (MAQFDTEYQRLEASYSDSPP) are disordered. Ala2 carries the N-acetylalanine modification. Over 2–61 (AQFDTEYQRLEASYSDSPPGEEDLLVHVAEGSKSPWHHIENLDLFFSRVYNLHQKNGFTC) the chain is Cytoplasmic. Positions 8–11 (YQRL) match the Tyrosine-based sorting signal motif. Phosphoserine is present on residues Ser14, Ser16, and Ser18. The chain crosses the membrane as a helical span at residues 62–84 (MLIGEIFELMQFLFVVAFTTFLV). The Lumenal portion of the chain corresponds to 85-128 (SCVDYDILFANKMVNHSLHPTEPVKVTLPDAFLPAQVCSARIQE). N-linked (GlcNAc...) asparagine glycosylation occurs at Asn99. Residues 129–154 (NGSLITILVIAGVFWIHRLIKFIYNI) form a helical membrane-spanning segment. Over 155 to 290 (CCYWEIHSFY…ELAQRLSNRI (136 aa)) the chain is Cytoplasmic. The stretch at 291 to 301 (LWIGIANFLLC) is an intramembrane region. Over 302 to 319 (PLILIWQILYAFFSYAEV) the chain is Cytoplasmic. The stretch at 320-328 (LKREPGALG) is an intramembrane region. Topologically, residues 329 to 371 (ARCWSLYGRCYLRHFNELEHELQSRLNRGYKPASKYMNCFLSP) are cytoplasmic. Residues 372 to 397 (LLTLLAKNGAFFAGSILAVLIALTIY) form a helical membrane-spanning segment. The Lumenal portion of the chain corresponds to 398-406 (DEDVLAVEH). The chain crosses the membrane as a helical span at residues 407–424 (VLTTVTLLGVTVTVCRSF). The Cytoplasmic segment spans residues 425 to 470 (IPDQHMVFCPEQLLRVILAHIHYMPDHWQGNAHRSQTRDEFAQLFQ). An intramembrane segment occupies 471 to 480 (YKAVFILEEL). The Cytoplasmic segment spans residues 481–483 (LSP). The stretch at 484–492 (IVTPLILIF) is an intramembrane region. The Cytoplasmic segment spans residues 493-839 (CLRPRALEII…DELPPQVHKV (347 aa)). Ser656, Ser735, Ser738, Ser741, and Ser828 each carry phosphoserine. 2 disordered regions span residues 656 to 686 (SPLQPGQAPTGRAHSTMTGSGVDARTASSGS) and 717 to 839 (HKQQ…VHKV). A compositionally biased stretch (basic and acidic residues) spans 724–736 (EPERHVWHRRESD). Composition is skewed to acidic residues over residues 737 to 747 (ESGESAPDEGG) and 823 to 832 (VPEEGSEDEL).

The protein belongs to the ATG9 family. In terms of assembly, homotrimer; forms a homotrimer with a central pore that forms a path between the two membrane leaflets. Interacts (via cytoplasmic its C-terminus) with ATG2A. Interacts with SUPT20H. Interacts (via the tyrosine-based sorting signal motif) with AP4M1; promoting association with the AP-4 complex. Interacts with ARFIP1 and ARFIP2. Interacts with PI4K2A and PI4KB. Interacts with ATG4A; the interaction is direct and promotes ATG9A trafficking. Ufmylated in a DDRGK1 dependent manner.

Its subcellular location is the preautophagosomal structure membrane. It localises to the cytoplasmic vesicle. The protein localises to the autophagosome membrane. The protein resides in the golgi apparatus. It is found in the trans-Golgi network membrane. Its subcellular location is the late endosome membrane. It localises to the recycling endosome membrane. The protein localises to the endoplasmic reticulum membrane. The protein resides in the mitochondrion membrane. It catalyses the reaction a 1,2-diacyl-sn-glycero-3-phosphocholine(in) = a 1,2-diacyl-sn-glycero-3-phosphocholine(out). It carries out the reaction a 1,2-diacyl-sn-glycero-3-phospho-L-serine(in) = a 1,2-diacyl-sn-glycero-3-phospho-L-serine(out). The catalysed reaction is a 1,2-diacyl-sn-glycero-3-phosphoethanolamine(in) = a 1,2-diacyl-sn-glycero-3-phosphoethanolamine(out). Phospholipid scramblase involved in autophagy by mediating autophagosomal membrane expansion. Cycles between the preautophagosomal structure/phagophore assembly site (PAS) and the cytoplasmic vesicle pool and supplies membrane for the growing autophagosome. Lipid scramblase activity plays a key role in preautophagosomal structure/phagophore assembly by distributing the phospholipids that arrive through ATG2 (ATG2A or ATG2B) from the cytoplasmic to the luminal leaflet of the bilayer, thereby driving autophagosomal membrane expansion. Also required to supply phosphatidylinositol 4-phosphate to the autophagosome initiation site by recruiting the phosphatidylinositol 4-kinase beta (PI4KB) in a process dependent on ARFIP2, but not ARFIP1. In addition to autophagy, also plays a role in necrotic cell death. The protein is Autophagy-related protein 9A of Homo sapiens (Human).